Here is a 236-residue protein sequence, read N- to C-terminus: 2-phospho-L-lactate guanylyltransferase (236 aa).

Belongs to the CofC family. Homodimer.

The enzyme catalyses (2S)-2-phospholactate + GTP + H(+) = (2S)-lactyl-2-diphospho-5'-guanosine + diphosphate. Its pathway is cofactor biosynthesis; coenzyme F420 biosynthesis. Functionally, guanylyltransferase that catalyzes the activation of (2S)-2-phospholactate (2-PL) as (2S)-lactyl-2-diphospho-5'-guanosine, via the condensation of 2-PL with GTP. It is involved in the biosynthesis of coenzyme F420, a hydride carrier cofactor. This Natrialba magadii (strain ATCC 43099 / DSM 3394 / CCM 3739 / CIP 104546 / IAM 13178 / JCM 8861 / NBRC 102185 / NCIMB 2190 / MS3) (Natronobacterium magadii) protein is 2-phospho-L-lactate guanylyltransferase.